Consider the following 328-residue polypeptide: D-cysteine desulfhydrase (328 aa).

At lysine 51 the chain carries N6-(pyridoxal phosphate)lysine.

This sequence belongs to the ACC deaminase/D-cysteine desulfhydrase family. Homodimer. The cofactor is pyridoxal 5'-phosphate.

The catalysed reaction is D-cysteine + H2O = hydrogen sulfide + pyruvate + NH4(+) + H(+). Its function is as follows. Catalyzes the alpha,beta-elimination reaction of D-cysteine and of several D-cysteine derivatives. It could be a defense mechanism against D-cysteine. This Salmonella choleraesuis (strain SC-B67) protein is D-cysteine desulfhydrase.